Here is a 185-residue protein sequence, read N- to C-terminus: ATP-dependent protease subunit HslV (185 aa).

Thr6 is an active-site residue. Positions 162, 165, and 168 each coordinate Na(+).

Belongs to the peptidase T1B family. HslV subfamily. In terms of assembly, a double ring-shaped homohexamer of HslV is capped on each side by a ring-shaped HslU homohexamer. The assembly of the HslU/HslV complex is dependent on binding of ATP.

The protein localises to the cytoplasm. The catalysed reaction is ATP-dependent cleavage of peptide bonds with broad specificity.. With respect to regulation, allosterically activated by HslU binding. Protease subunit of a proteasome-like degradation complex believed to be a general protein degrading machinery. This Nitratidesulfovibrio vulgaris (strain DSM 19637 / Miyazaki F) (Desulfovibrio vulgaris) protein is ATP-dependent protease subunit HslV.